A 344-amino-acid polypeptide reads, in one-letter code: DNA-directed RNA polymerase subunit alpha (344 aa).

The interval 1-246 (MPVEKFLKDF…EFLFPLIDFE (246 aa)) is alpha N-terminal domain (alpha-NTD). The tract at residues 259-344 (ESSNLLDMSI…VLSKNVKISE (86 aa)) is alpha C-terminal domain (alpha-CTD).

Belongs to the RNA polymerase alpha chain family. As to quaternary structure, homodimer. The RNAP catalytic core consists of 2 alpha, 1 beta, 1 beta' and 1 omega subunit. When a sigma factor is associated with the core the holoenzyme is formed, which can initiate transcription.

The enzyme catalyses RNA(n) + a ribonucleoside 5'-triphosphate = RNA(n+1) + diphosphate. Its function is as follows. DNA-dependent RNA polymerase catalyzes the transcription of DNA into RNA using the four ribonucleoside triphosphates as substrates. In Borrelia garinii subsp. bavariensis (strain ATCC BAA-2496 / DSM 23469 / PBi) (Borreliella bavariensis), this protein is DNA-directed RNA polymerase subunit alpha.